Reading from the N-terminus, the 356-residue chain is Iron-regulated protein A (356 aa).

Positions 1 to 44 (MIVTGSQVRQGLNTWFVLPLRRTAIGLGCAGVATLFSACGQTQA) are cleaved as a signal peptide. Hydrophilic stretches follow at residues 75 to 145 (QALQ…EQRE) and 240 to 310 (GGPL…ATAR).

The iron-regulated protein A is one unit of the protein complex CPVI-4, which is synthesized under iron deficient conditions.

The protein localises to the cell inner membrane. Functionally, irpA occurs under iron-deficient growth conditions in cyanobacterium Synechococcus and disappears in cells recovering from iron starvation. It seems to be involved in iron acquisition, uptake or storage. The protein is Iron-regulated protein A (irpA) of Synechococcus elongatus (strain ATCC 33912 / PCC 7942 / FACHB-805) (Anacystis nidulans R2).